The primary structure comprises 240 residues: Fibronectin type III domain-containing protein 5 (240 aa).

Residues 1-10 (MQAARGGAGR) show a composition bias toward gly residues. Positions 1 to 33 (MQAARGGAGRPGREGRGLERECERSPGPGVAMP) are disordered. Basic and acidic residues predominate over residues 11-24 (PGREGRGLERECER). Residues 64–155 (APVNVTVRHL…EPVLFKTPRE (92 aa)) form the Fibronectin type-III domain. 2 N-linked (GlcNAc...) asparagine glycosylation sites follow: asparagine 67 and asparagine 112. Residues 181-201 (GEVLIIVVVLFMWAGVIALFC) form a helical membrane-spanning segment. Positions 210–221 (NEPNNNKEKTKS) are enriched in basic and acidic residues. Positions 210 to 240 (NEPNNNKEKTKSASETSTPEHQGGGLLRSKI) are disordered. Gly residues predominate over residues 231–240 (QGGGLLRSKI). The short motif at 238-240 (SKI) is the Microbody targeting signal element.

In terms of assembly, dimer; may exist in other oligomeric forms. In terms of processing, the extracellular domain is cleaved and released from the cell membrane. N-Glycosylated. In terms of tissue distribution, in adult, it is highly expressed in skeletal muscle, heart and brain.

The protein localises to the cell membrane. Its subcellular location is the peroxisome membrane. The protein resides in the secreted. In terms of biological role, mediates beneficial effects of muscular exercise. Induces browning of white adipose tissue by stimulating UCP1 expression, at least in part, via the nuclear receptor PPARA. In Mus musculus (Mouse), this protein is Fibronectin type III domain-containing protein 5 (Fndc5).